Reading from the N-terminus, the 157-residue chain is Transcription elongation factor GreA (157 aa).

A coiled-coil region spans residues 13-75 (RARLEAELEE…EIKSILARAQ (63 aa)). Positions 113 to 142 (EAKPSEGKISNESPIGSALLGKRPRQKVTV) are disordered.

This sequence belongs to the GreA/GreB family.

Its function is as follows. Necessary for efficient RNA polymerase transcription elongation past template-encoded arresting sites. The arresting sites in DNA have the property of trapping a certain fraction of elongating RNA polymerases that pass through, resulting in locked ternary complexes. Cleavage of the nascent transcript by cleavage factors such as GreA or GreB allows the resumption of elongation from the new 3'terminus. GreA releases sequences of 2 to 3 nucleotides. The polypeptide is Transcription elongation factor GreA (Roseiflexus sp. (strain RS-1)).